Here is a 140-residue protein sequence, read N- to C-terminus: Transcription antitermination protein NusB (140 aa).

The protein belongs to the NusB family.

In terms of biological role, involved in transcription antitermination. Required for transcription of ribosomal RNA (rRNA) genes. Binds specifically to the boxA antiterminator sequence of the ribosomal RNA (rrn) operons. The sequence is that of Transcription antitermination protein NusB from Elusimicrobium minutum (strain Pei191).